Consider the following 112-residue polypeptide: DNA-binding protein TSIB_0525 (112 aa).

Belongs to the PDCD5 family.

The polypeptide is DNA-binding protein TSIB_0525 (Thermococcus sibiricus (strain DSM 12597 / MM 739)).